Here is a 126-residue protein sequence, read N- to C-terminus: Arginine decarboxylase proenzyme (126 aa).

The active-site Schiff-base intermediate with substrate; via pyruvic acid is serine 74. A Pyruvic acid (Ser); by autocatalysis modification is found at serine 74. Residue histidine 79 is the Proton acceptor; for processing activity of the active site. Cysteine 94 (proton donor; for catalytic activity) is an active-site residue.

It belongs to the prokaryotic AdoMetDC family. Type 1 subfamily. Heterooctamer of four alpha and four beta chains arranged as a tetramer of alpha/beta heterodimers. It depends on pyruvate as a cofactor. Is synthesized initially as an inactive proenzyme. Formation of the active enzyme involves a self-maturation process in which the active site pyruvoyl group is generated from an internal serine residue via an autocatalytic post-translational modification. Two non-identical subunits are generated from the proenzyme in this reaction, and the pyruvate is formed at the N-terminus of the alpha chain, which is derived from the carboxyl end of the proenzyme. The post-translation cleavage follows an unusual pathway, termed non-hydrolytic serinolysis, in which the side chain hydroxyl group of the serine supplies its oxygen atom to form the C-terminus of the beta chain, while the remainder of the serine residue undergoes an oxidative deamination to produce ammonia and the pyruvoyl group blocking the N-terminus of the alpha chain.

The enzyme catalyses L-arginine + H(+) = agmatine + CO2. It functions in the pathway amine and polyamine biosynthesis; agmatine biosynthesis; agmatine from L-arginine: step 1/1. Its function is as follows. Specifically catalyzes the decarboxylation of L-arginine to agmatine. Has no S-adenosylmethionine decarboxylase (AdoMetDC) activity. This Pyrobaculum calidifontis (strain DSM 21063 / JCM 11548 / VA1) protein is Arginine decarboxylase proenzyme.